Reading from the N-terminus, the 470-residue chain is MDAAAPDLGIGIVAAVRGGIVDIRFANRPPSIRSLVRTGKAGEIVIEILSQLDAHRVRGIALTPTQGLARGMLVKDTGGPLRAPVGRATLSRMFDVFGEVIDRKPPPCDAQWRTVHHSPPPLVRRSTRSEIFETGIKIIDVLMPLERGGKAGLLGGAGVGKTILLTEMIHNVAGRHRGVSIFCGIGERCREGEELYRDIMAAGVLENMVMVFGQMNEPPGARFRVAHAALTMAEYFRDDEHRDVLLLVDNIYRFIQAGMEVSGLMGQMPSRMGYQPTMGTELAQLEERIAHTDNGAITSIQAVYVPADDFSDPAAVHAFSHFSASIVLSRKRASEGLYPAIDPLQSGAKMATPSVIGERHYRIAQETRHTLAQYTELKDVIAMLGLEQLSPEDRALVARARRLERFFTQPFFTTEHFTGIKGKLVSLEDALDGCERILRDEYRDLPEQALYMIGKASEAEPGGSAKNASS.

155 to 162 (GGAGVGKT) lines the ATP pocket.

It belongs to the ATPase alpha/beta chains family. In terms of assembly, F-type ATPases have 2 components, CF(1) - the catalytic core - and CF(0) - the membrane proton channel. CF(1) has five subunits: alpha(3), beta(3), gamma(1), delta(1), epsilon(1). CF(0) has three main subunits: a(1), b(2) and c(9-12). The alpha and beta chains form an alternating ring which encloses part of the gamma chain. CF(1) is attached to CF(0) by a central stalk formed by the gamma and epsilon chains, while a peripheral stalk is formed by the delta and b chains.

It is found in the cell inner membrane. The catalysed reaction is ATP + H2O + 4 H(+)(in) = ADP + phosphate + 5 H(+)(out). Produces ATP from ADP in the presence of a proton gradient across the membrane. The catalytic sites are hosted primarily by the beta subunits. The sequence is that of ATP synthase subunit beta 2 from Nitrosospira multiformis (strain ATCC 25196 / NCIMB 11849 / C 71).